The following is an 822-amino-acid chain: Integrator complex assembly factor BRAT1 (822 aa).

Residues 100–200 form a required for interaction with NDFIP1 region; sequence LGLFGESGAP…WPMCAQKIVN (101 aa). 2 HEAT repeats span residues 495–531 and 544–576; these read LLFL…IRHW and SEVP…SSQG. Phosphoserine is present on S743. Positions 820–822 match the BRAT1-like motif motif; sequence DCY. A Zn(2+)-binding site is contributed by C821.

The protein belongs to the BRAT1 family. In terms of assembly, part of the multiprotein complex composed of BRAT1, WDR73, as well as integrator complex subunits INTS9 and INTS11. Interacts with BRCA1 and ATM. Interacts with MTOR and RPTOR. Interacts with NDFIP1. Interacts with SMC1A and PRKDC. Ubiquitinated by NEDD4, NEDD4L and ITCH; mono- and polyubiquitinated forms are detected. In terms of tissue distribution, high levels detected in the cortex and much lower levels detected in the cerebellum, spinal cord and lung (at protein level).

The protein resides in the nucleus. The protein localises to the cytoplasm. Functionally, component of a multiprotein complex required for the assembly of the RNA endonuclease module of the integrator complex. Associates with INTS9 and INTS11 in the cytoplasm and blocks the active site of INTS11 to inhibit the endonuclease activity of INTS11 before formation of the full integrator complex. Following dissociation of WDR73 of the complex, BRAT1 facilitates the nuclear import of the INTS9-INTS11 heterodimer. In the nucleus, INTS4 is integrated to the INTS9-INTS11 heterodimer and BRAT1 is released from the mature RNA endonuclease module by inositol hexakisphosphate (InsP6). BRAT1 is also involved in DNA damage response; activates kinases ATM, SMC1A and PRKDC by modulating their phosphorylation status following ionizing radiation (IR) stress. Plays a role in regulating mitochondrial function and cell proliferation. Required for protein stability of MTOR and MTOR-related proteins, and cell cycle progress by growth factors. In Mus musculus (Mouse), this protein is Integrator complex assembly factor BRAT1.